A 159-amino-acid chain; its full sequence is Trafficking protein particle complex subunit 6A (159 aa).

Serine 33 is subject to Phosphoserine.

This sequence belongs to the TRAPP small subunits family. BET3 subfamily. In terms of assembly, part of the multisubunit transport protein particle (TRAPP) complex. Heterodimer with TRAPPC3. The heterodimer TRAPPC3-TRAPPC6A interacts with TRAPPC2L. Interacts with TRAPPC2L.

It localises to the golgi apparatus. Its subcellular location is the cis-Golgi network. The protein localises to the endoplasmic reticulum. May play a role in vesicular transport during the biogenesis of melanosomes. In Bos taurus (Bovine), this protein is Trafficking protein particle complex subunit 6A.